The sequence spans 475 residues: Adenosylhomocysteinase (475 aa).

Substrate is bound by residues threonine 60, aspartate 133, and glutamate 198. Threonine 199–threonine 201 serves as a coordination point for NAD(+). Residues lysine 228 and aspartate 232 each coordinate substrate. NAD(+) is bound by residues asparagine 233, glycine 262–glycine 267, glutamate 285, asparagine 320, isoleucine 341–histidine 343, and asparagine 389.

This sequence belongs to the adenosylhomocysteinase family. The cofactor is NAD(+).

Its subcellular location is the cytoplasm. It carries out the reaction S-adenosyl-L-homocysteine + H2O = L-homocysteine + adenosine. It functions in the pathway amino-acid biosynthesis; L-homocysteine biosynthesis; L-homocysteine from S-adenosyl-L-homocysteine: step 1/1. Its function is as follows. May play a key role in the regulation of the intracellular concentration of adenosylhomocysteine. The sequence is that of Adenosylhomocysteinase from Syntrophotalea carbinolica (strain DSM 2380 / NBRC 103641 / GraBd1) (Pelobacter carbinolicus).